Consider the following 555-residue polypeptide: Formate--tetrahydrofolate ligase (555 aa).

Residue 65 to 72 participates in ATP binding; it reads TPAGEGKS.

It belongs to the formate--tetrahydrofolate ligase family.

The catalysed reaction is (6S)-5,6,7,8-tetrahydrofolate + formate + ATP = (6R)-10-formyltetrahydrofolate + ADP + phosphate. It functions in the pathway one-carbon metabolism; tetrahydrofolate interconversion. This is Formate--tetrahydrofolate ligase from Staphylococcus aureus (strain USA300).